A 566-amino-acid chain; its full sequence is Arginine--tRNA ligase (566 aa).

The 'HIGH' region signature appears at 123 to 133 (PNIAKPFHIGH).

This sequence belongs to the class-I aminoacyl-tRNA synthetase family. Monomer.

It localises to the cytoplasm. The catalysed reaction is tRNA(Arg) + L-arginine + ATP = L-arginyl-tRNA(Arg) + AMP + diphosphate. This chain is Arginine--tRNA ligase, found in Halothermothrix orenii (strain H 168 / OCM 544 / DSM 9562).